The chain runs to 129 residues: Histone H2A.J (129 aa).

The interval 1 to 22 (MSGRGKQGGKVRAKAKSRSSRA) is disordered. Ser2 is modified (N-acetylserine). Position 2 is a phosphoserine (Ser2). N6-acetyllysine is present on Lys6. The segment covering 7-19 (QGGKVRAKAKSRS) has biased composition (basic residues). The residue at position 10 (Lys10) is an N6-lactoyllysine; alternate. Glycyl lysine isopeptide (Lys-Gly) (interchain with G-Cter in ubiquitin) cross-links involve residues Lys14 and Lys16. An N5-methylglutamine modification is found at Gln105. A Glycyl lysine isopeptide (Lys-Gly) (interchain with G-Cter in ubiquitin) cross-link involves residue Lys120.

The protein belongs to the histone H2A family. The nucleosome is a histone octamer containing two molecules each of H2A, H2B, H3 and H4 assembled in one H3-H4 heterotetramer and two H2A-H2B heterodimers. The octamer wraps approximately 147 bp of DNA. Monoubiquitination of Lys-120 (H2AXK119ub) gives a specific tag for epigenetic transcriptional repression. Following DNA double-strand breaks (DSBs), it is ubiquitinated through 'Lys-63' linkage of ubiquitin moieties. In terms of processing, phosphorylation on Ser-2 is enhanced during mitosis. Phosphorylation on Ser-2 directly represses transcription.

Its subcellular location is the nucleus. The protein localises to the chromosome. Functionally, core component of nucleosome. Nucleosomes wrap and compact DNA into chromatin, limiting DNA accessibility to the cellular machineries which require DNA as a template. Histones thereby play a central role in transcription regulation, DNA repair, DNA replication and chromosomal stability. DNA accessibility is regulated via a complex set of post-translational modifications of histones, also called histone code, and nucleosome remodeling. The sequence is that of Histone H2A.J (H2A-IX) from Gallus gallus (Chicken).